The sequence spans 197 residues: Phosphoheptose isomerase (197 aa).

Residues 37–197 enclose the SIS domain; that stretch reads MLQCLMNDGK…CIDSVLLEGM (161 aa). Substrate is bound at residue 52–54; that stretch reads NGG. The Zn(2+) site is built by histidine 61 and glutamate 65. Substrate is bound by residues glutamate 65, 94-95, 120-122, serine 125, and glutamine 175; these read ND and STS. Zn(2+)-binding residues include glutamine 175 and histidine 183.

It belongs to the SIS family. GmhA subfamily. In terms of assembly, homotetramer. It depends on Zn(2+) as a cofactor.

The protein localises to the cytoplasm. The enzyme catalyses 2 D-sedoheptulose 7-phosphate = D-glycero-alpha-D-manno-heptose 7-phosphate + D-glycero-beta-D-manno-heptose 7-phosphate. The protein operates within carbohydrate biosynthesis; D-glycero-D-manno-heptose 7-phosphate biosynthesis; D-glycero-alpha-D-manno-heptose 7-phosphate and D-glycero-beta-D-manno-heptose 7-phosphate from sedoheptulose 7-phosphate: step 1/1. Catalyzes the isomerization of sedoheptulose 7-phosphate in D-glycero-D-manno-heptose 7-phosphate. This is Phosphoheptose isomerase from Neisseria meningitidis serogroup C / serotype 2a (strain ATCC 700532 / DSM 15464 / FAM18).